A 34-amino-acid chain; its full sequence is Stromal 70 kDa heat shock-related protein, chloroplastic (34 aa).

Belongs to the heat shock protein 70 family.

Its subcellular location is the plastid. It localises to the chloroplast stroma. Its function is as follows. Interacts with newly imported chloroplast proteins to assist in their maturation. This chain is Stromal 70 kDa heat shock-related protein, chloroplastic, found in Cucurbita maxima (Pumpkin).